The sequence spans 693 residues: Elongation factor G (693 aa).

Positions 7–282 (EKIRNIGITA…SVIDYLPAPT (276 aa)) constitute a tr-type G domain. Residues 16-23 (AHIDAGKT), 80-84 (DTPGH), and 134-137 (NKLD) contribute to the GTP site.

The protein belongs to the TRAFAC class translation factor GTPase superfamily. Classic translation factor GTPase family. EF-G/EF-2 subfamily.

Its subcellular location is the cytoplasm. Functionally, catalyzes the GTP-dependent ribosomal translocation step during translation elongation. During this step, the ribosome changes from the pre-translocational (PRE) to the post-translocational (POST) state as the newly formed A-site-bound peptidyl-tRNA and P-site-bound deacylated tRNA move to the P and E sites, respectively. Catalyzes the coordinated movement of the two tRNA molecules, the mRNA and conformational changes in the ribosome. This Granulibacter bethesdensis (strain ATCC BAA-1260 / CGDNIH1) protein is Elongation factor G.